The primary structure comprises 371 residues: DNA-directed RNA polymerase subunit alpha (371 aa).

The alpha N-terminal domain (alpha-NTD) stretch occupies residues 1 to 248 (MSVKYGKFEM…KHFEVFNQFN (248 aa)). Residues 264–371 (DQDELMDKLS…KELVKHEDAK (108 aa)) are alpha C-terminal domain (alpha-CTD).

The protein belongs to the RNA polymerase alpha chain family. In terms of assembly, homodimer. The RNAP catalytic core consists of 2 alpha, 1 beta, 1 beta' and 1 omega subunit. When a sigma factor is associated with the core the holoenzyme is formed, which can initiate transcription.

It catalyses the reaction RNA(n) + a ribonucleoside 5'-triphosphate = RNA(n+1) + diphosphate. Functionally, DNA-dependent RNA polymerase catalyzes the transcription of DNA into RNA using the four ribonucleoside triphosphates as substrates. This is DNA-directed RNA polymerase subunit alpha from Protochlamydia amoebophila (strain UWE25).